Reading from the N-terminus, the 1454-residue chain is ABC transporter G family member 39 (1454 aa).

The region spanning 175–448 is the ABC transporter 1 domain; the sequence is LGFFHLLPSK…FEYFGFQCPE (274 aa). Residue 208–215 participates in ATP binding; sequence GPPSSGKT. Residues 526–739 enclose the ABC transmembrane type-2 1 domain; sequence ELFKACFDRE…GQTAIVMNEF (214 aa). 7 consecutive transmembrane segments (helical) span residues 544-564, 584-604, 623-643, 663-683, 689-709, 716-736, and 775-795; these read FVYVFKTVQITIMSLITMTVY, MFFSLINVMFNGLAELAFTVM, FALPAWLLKIPLSLIESGIWI, LLAYFCVNQMALSLFRFLGAI, ISNSIGTFTLLIVFTLGGFII, PWMTWAYYMSPMMYGQTAIVM, and FWICIVALLGFSLLFNLFYIL. Basic and acidic residues predominate over residues 812 to 824; it reads EEGKDKQKGENRG. A disordered region spans residues 812-838; sequence EEGKDKQKGENRGTEGSVVELNSSSNK. The region spanning 853–1106 is the ABC transporter 2 domain; it reads LAFNNVNYYV…LVEYFEAVEG (254 aa). Position 898–905 (898–905) interacts with ATP; it reads GVSGAGKT. The ABC transmembrane type-2 2 domain maps to 1178–1392; that stretch reads TQTKACFWKQ…TLYGLITSQV (215 aa). Transmembrane regions (helical) follow at residues 1199 to 1219, 1231 to 1251, 1285 to 1303, 1312 to 1332, 1342 to 1362, 1367 to 1387, and 1423 to 1443; these read AIRFLMTVVIGVLFGLIFWQI, NFFGAMYAAVLFLGALNAATV, IMYNTIQTGVYTLILYSMI, FLWFYYYMLTSFIYFTLYGMM, IAGICMSFFLSLWNLFSGFLI, IPIWWRWYYWATPVAWTLYGL, and FLPVVAVVHIAWILLFLFVFA.

It belongs to the ABC transporter superfamily. ABCG family. PDR (TC 3.A.1.205) subfamily.

Its subcellular location is the membrane. In terms of biological role, may be a general defense protein. The polypeptide is ABC transporter G family member 39 (ABCG39) (Arabidopsis thaliana (Mouse-ear cress)).